The chain runs to 223 residues: Serum amyloid P-component (223 aa).

Positions 1-19 (MDKMLFWVSVFTIFLDVFA) are cleaved as a signal peptide. The 200-residue stretch at 24–223 (DKKVFVFPRE…YVIIKPRVWD (200 aa)) folds into the Pentraxin (PTX) domain. A disulfide bond links cysteine 55 and cysteine 114. 6 residues coordinate Ca(2+): aspartate 77, asparagine 78, glutamate 155, glutamine 156, aspartate 157, and glutamine 167. Residue asparagine 198 is glycosylated (N-linked (GlcNAc...) asparagine).

It belongs to the pentraxin family. In terms of assembly, homopentamer. Pentraxin (or pentaxin) have a discoid arrangement of 5 non-covalently bound subunits. The cofactor is Ca(2+).

The protein resides in the secreted. This chain is Serum amyloid P-component (PTX2), found in Cavia porcellus (Guinea pig).